The chain runs to 371 residues: tRNA-specific 2-thiouridylase MnmA (371 aa).

ATP-binding positions include 7–14 (GLSGGVDS) and Met33. The segment at 103–105 (NPD) is interaction with target base in tRNA. The active-site Nucleophile is Cys108. Cys108 and Cys201 are disulfide-bonded. Position 133 (Gly133) interacts with ATP. The interval 151–153 (KDQ) is interaction with tRNA. The Cysteine persulfide intermediate role is filled by Cys201. The interval 308–309 (RY) is interaction with tRNA.

Belongs to the MnmA/TRMU family.

The protein resides in the cytoplasm. It carries out the reaction S-sulfanyl-L-cysteinyl-[protein] + uridine(34) in tRNA + AH2 + ATP = 2-thiouridine(34) in tRNA + L-cysteinyl-[protein] + A + AMP + diphosphate + H(+). In terms of biological role, catalyzes the 2-thiolation of uridine at the wobble position (U34) of tRNA, leading to the formation of s(2)U34. The polypeptide is tRNA-specific 2-thiouridylase MnmA (Mycoplasmopsis pulmonis (strain UAB CTIP) (Mycoplasma pulmonis)).